Here is a 180-residue protein sequence, read N- to C-terminus: Photosystem II extrinsic protein V (180 aa).

Positions 1 to 40 (MFSKAFSFQKVFAPARRRLLVLLLAALMAGFGWGLAPVFA) are cleaved as a signal peptide. Heme c-binding residues include Cys-73, Cys-76, His-77, and His-128.

The protein belongs to the cytochrome c family. PsbV subfamily. As to quaternary structure, PSII is composed of 1 copy each of membrane proteins PsbA, PsbB, PsbC, PsbD, PsbE, PsbF, PsbH, PsbI, PsbJ, PsbK, PsbL, PsbM, PsbT, PsbX, PsbY, PsbZ, Psb30/Ycf12, peripheral proteins PsbO, CyanoQ (PsbQ), PsbU, PsbV and a large number of cofactors. It forms dimeric complexes. The cofactor is heme c.

It localises to the cellular thylakoid membrane. One of the extrinsic, lumenal subunits of photosystem II (PSII). PSII is a light-driven water plastoquinone oxidoreductase, using light energy to abstract electrons from H(2)O, generating a proton gradient subsequently used for ATP formation. The extrinsic proteins stabilize the structure of photosystem II oxygen-evolving complex (OEC), the ion environment of oxygen evolution and protect the OEC against heat-induced inactivation. Low-potential cytochrome c that plays a role in the OEC of PSII. This Synechococcus sp. (strain JA-2-3B'a(2-13)) (Cyanobacteria bacterium Yellowstone B-Prime) protein is Photosystem II extrinsic protein V.